Consider the following 524-residue polypeptide: GMP synthase [glutamine-hydrolyzing] (524 aa).

A Glutamine amidotransferase type-1 domain is found at 5–195; it reads KVIVIDFGGQ…VRGVCGCAGT (191 aa). Catalysis depends on C82, which acts as the Nucleophile. Active-site residues include H169 and E171. Positions 196-389 constitute a GMPS ATP-PPase domain; the sequence is WKMDSFVKNT…LGLPDYLVFR (194 aa). 223–229 lines the ATP pocket; the sequence is SGGVDSS.

In terms of assembly, homodimer.

The catalysed reaction is XMP + L-glutamine + ATP + H2O = GMP + L-glutamate + AMP + diphosphate + 2 H(+). It participates in purine metabolism; GMP biosynthesis; GMP from XMP (L-Gln route): step 1/1. In terms of biological role, catalyzes the synthesis of GMP from XMP. The protein is GMP synthase [glutamine-hydrolyzing] of Agathobacter rectalis (strain ATCC 33656 / DSM 3377 / JCM 17463 / KCTC 5835 / VPI 0990) (Eubacterium rectale).